The primary structure comprises 409 residues: Autophagy-related protein 21 (409 aa).

WD repeat units lie at residues 1 to 35 (MKVLRFNQDASCFSAVSRPHSMTIYNCDPFGKCFE), 221 to 261 (VHKG…TLQS), 273 to 312 (TRPCSIYEMKIDPTRRYLACVGHTDTIHIFDLERQGQQNK), and 361 to 402 (KVDD…GECI). A L/FRRG motif motif is present at residues 269 to 273 (FRRGT).

This sequence belongs to the WD repeat PROPPIN family.

It localises to the cytoplasm. It is found in the membrane. The protein localises to the vacuole membrane. Required for cytoplasm to vacuole transport (Cvt) vesicles formation and mitophagy. Involved in binding of phosphatidylethanolamine to ATG8 and in recruitment of ATG8 and ATG5 to the pre-autophagosomal structure. Protects ATG8 from ARG4-mediated cleavage. In Eremothecium gossypii (strain ATCC 10895 / CBS 109.51 / FGSC 9923 / NRRL Y-1056) (Yeast), this protein is Autophagy-related protein 21 (ATG21).